We begin with the raw amino-acid sequence, 518 residues long: Membrane-bound lytic murein transglycosylase F (518 aa).

The first 21 residues, 1-21, serve as a signal peptide directing secretion; that stretch reads MKKLKINYLFIGILALLLAVA. A non-LT domain region spans residues 22-269; it reads LWPSIPWFGK…RIEEKYLGHG (248 aa). An LT domain region spans residues 270-518; that stretch reads DDFDYVDTRT…SRKGSEEKQN (249 aa). Residue Glu-314 is part of the active site.

In the N-terminal section; belongs to the bacterial solute-binding protein 3 family. This sequence in the C-terminal section; belongs to the transglycosylase Slt family.

It localises to the cell outer membrane. The catalysed reaction is Exolytic cleavage of the (1-&gt;4)-beta-glycosidic linkage between N-acetylmuramic acid (MurNAc) and N-acetylglucosamine (GlcNAc) residues in peptidoglycan, from either the reducing or the non-reducing ends of the peptidoglycan chains, with concomitant formation of a 1,6-anhydrobond in the MurNAc residue.. Its function is as follows. Murein-degrading enzyme that degrades murein glycan strands and insoluble, high-molecular weight murein sacculi, with the concomitant formation of a 1,6-anhydromuramoyl product. Lytic transglycosylases (LTs) play an integral role in the metabolism of the peptidoglycan (PG) sacculus. Their lytic action creates space within the PG sacculus to allow for its expansion as well as for the insertion of various structures such as secretion systems and flagella. The polypeptide is Membrane-bound lytic murein transglycosylase F (Shigella boydii serotype 18 (strain CDC 3083-94 / BS512)).